Consider the following 587-residue polypeptide: Folylpolyglutamate synthase, mitochondrial (587 aa).

The transit peptide at 1–42 (MSWARSRLCSTLSLAAVSARGATTEGAARRGMSAWPAPQEPG) directs the protein to the mitochondrion. An ATP-binding site is contributed by 106–109 (GKGS). The Mg(2+) site is built by serine 130, glutamate 200, and histidine 228. Residues arginine 363 and aspartate 377 each contribute to the ATP site. At serine 539 the chain carries Phosphoserine.

The protein belongs to the folylpolyglutamate synthase family. In terms of assembly, monomer. The cofactor is a monovalent cation. As to expression, with non-specific probe, highest content in kidney and liver and lowest in spleen, lung and small intestine, and readily detectable in all of the tumors except hepatoma. Isoform 1 and isoform 2 expressed in leukemic cells and isoform 4 and isoform 5 in liver cells. Isoform 1 and isoform 2 exclusively expressed in hepatoma and Lewis lung carcinoma. Isoform 1 and isoform 2 also expressed in bone marrow, small intestine and spleen. Kidney expresses isoform 1, isoform 2, isoform 4 and isoform 5.

Its subcellular location is the mitochondrion inner membrane. The protein localises to the mitochondrion matrix. The protein resides in the cytoplasm. The enzyme catalyses (6S)-5,6,7,8-tetrahydrofolyl-(gamma-L-Glu)(n) + L-glutamate + ATP = (6S)-5,6,7,8-tetrahydrofolyl-(gamma-L-Glu)(n+1) + ADP + phosphate + H(+). It functions in the pathway cofactor biosynthesis; tetrahydrofolylpolyglutamate biosynthesis. With respect to regulation, inhibited by ammonium sulfate. Inhibited by pentaglutamate derivative of DDATHF, but isoform 2 is inhibited to a greater extent at lower concentrations of the compound that is isoform 5. Isoform 5 is virtually unaffected by H(4)PteGlu(5) and 5,10-CH(2)-H(4)PteGlu(5) at concentrations that substantially inhibits the activity of isoform 2. Isoform 2 and 5 are equally sensitive to polyglutamates of 10-CHO-H(4)-PteGlu. Catalyzes conversion of folates to polyglutamate derivatives allowing concentration of folate compounds in the cell and the intracellular retention of these cofactors, which are important substrates for most of the folate-dependent enzymes that are involved in one-carbon transfer reactions involved in purine, pyrimidine and amino acid synthesis. Dihydrofolate, tetrahydrofolate, 5,10-methylenetetrahydrofolate, 10-formyltetrahydrofolate and 5-formyltetrahydrofolate are the best substrates. Folic acid and 5-methyltetrahydrofolate can also act as substrates. In Mus musculus (Mouse), this protein is Folylpolyglutamate synthase, mitochondrial (Fpgs).